The sequence spans 698 residues: Protein SST2 (698 aa).

A fungal-DR region spans residues 10-203 (ELSSKNFSRT…GAKPNVWSPT (194 aa)). Ser252 is modified (phosphoserine). The region spanning 273–358 (SNAGIRLFEN…SRSSFFTLSK (86 aa)) is the DEP domain. The residue at position 408 (Ser408) is a Phosphoserine. Residues 420 to 689 (KLDYVLTDPG…TQSDVYKDAS (270 aa)) enclose the RGS domain. Ser539 carries the phosphoserine; by MAPK modification. Positions 545–586 (FPTNLYDPSPASAESAASSISSTEADTLGEPPEVSLKPSKNL) are disordered. Over residues 551-570 (DPSPASAESAASSISSTEAD) the composition is skewed to low complexity. Residue Ser587 is modified to Phosphoserine.

In terms of processing, phosphorylated by FUS3 and KSS1.

Its function is as follows. Desensitization to alpha-factor pheromone. Is involved in regulating the signaling pathway for responding to mating pheromone. This Saccharomyces cerevisiae (strain ATCC 204508 / S288c) (Baker's yeast) protein is Protein SST2 (SST2).